Here is a 278-residue protein sequence, read N- to C-terminus: 3-methyl-2-oxobutanoate hydroxymethyltransferase 1 (278 aa).

Residues aspartate 49 and aspartate 88 each contribute to the Mg(2+) site. 3-methyl-2-oxobutanoate is bound by residues 49 to 50 (DS), aspartate 88, and lysine 118. Mg(2+) is bound at residue glutamate 120. The active-site Proton acceptor is the glutamate 187.

This sequence belongs to the PanB family. As to quaternary structure, homodecamer; pentamer of dimers. Mg(2+) is required as a cofactor.

The protein resides in the cytoplasm. It carries out the reaction 3-methyl-2-oxobutanoate + (6R)-5,10-methylene-5,6,7,8-tetrahydrofolate + H2O = 2-dehydropantoate + (6S)-5,6,7,8-tetrahydrofolate. Its pathway is cofactor biosynthesis; (R)-pantothenate biosynthesis; (R)-pantoate from 3-methyl-2-oxobutanoate: step 1/2. Its function is as follows. Catalyzes the reversible reaction in which hydroxymethyl group from 5,10-methylenetetrahydrofolate is transferred onto alpha-ketoisovalerate to form ketopantoate. This chain is 3-methyl-2-oxobutanoate hydroxymethyltransferase 1, found in Hahella chejuensis (strain KCTC 2396).